Reading from the N-terminus, the 392-residue chain is tRNA (guanine-N(7)-)-methyltransferase (392 aa).

The S-adenosyl-L-methionine site is built by Glu123, Glu148, and Asp175. Residues Lys201 and Asp231 each coordinate substrate.

The protein belongs to the class I-like SAM-binding methyltransferase superfamily. TrmB family.

It carries out the reaction guanosine(46) in tRNA + S-adenosyl-L-methionine = N(7)-methylguanosine(46) in tRNA + S-adenosyl-L-homocysteine. It participates in tRNA modification; N(7)-methylguanine-tRNA biosynthesis. Catalyzes the formation of N(7)-methylguanine at position 46 (m7G46) in tRNA. In Campylobacter jejuni (strain RM1221), this protein is tRNA (guanine-N(7)-)-methyltransferase.